Consider the following 166-residue polypeptide: RNA pyrophosphohydrolase (166 aa).

In terms of domain architecture, Nudix hydrolase spans 6–149; it reads GFRPNVGIIL…KRDVYRKAMM (144 aa). A Nudix box motif is present at residues 38–59; sequence GGIHFGETPEQALYRELREEVG.

The protein belongs to the Nudix hydrolase family. RppH subfamily. The cofactor is a divalent metal cation.

Functionally, accelerates the degradation of transcripts by removing pyrophosphate from the 5'-end of triphosphorylated RNA, leading to a more labile monophosphorylated state that can stimulate subsequent ribonuclease cleavage. This is RNA pyrophosphohydrolase from Acinetobacter baylyi (strain ATCC 33305 / BD413 / ADP1).